The chain runs to 527 residues: L-aspartate oxidase (527 aa).

Residues 17–20 (TGVA), K40, 48–55 (ATHYAQGG), and D212 each bind FAD. R281 (proton donor/acceptor) is an active-site residue. Residues E364 and 380–381 (SL) each bind FAD.

The protein belongs to the FAD-dependent oxidoreductase 2 family. NadB subfamily. Requires FAD as cofactor.

It localises to the cytoplasm. It catalyses the reaction L-aspartate + O2 = iminosuccinate + H2O2. The protein operates within cofactor biosynthesis; NAD(+) biosynthesis; iminoaspartate from L-aspartate (oxidase route): step 1/1. Functionally, catalyzes the oxidation of L-aspartate to iminoaspartate, the first step in the de novo biosynthesis of NAD(+). In Mycobacterium tuberculosis (strain CDC 1551 / Oshkosh), this protein is L-aspartate oxidase (nadB).